The primary structure comprises 1073 residues: DNA-directed RNA polymerase subunit beta (1073 aa).

The protein belongs to the RNA polymerase beta chain family. In terms of assembly, in plastids the minimal PEP RNA polymerase catalytic core is composed of four subunits: alpha, beta, beta', and beta''. When a (nuclear-encoded) sigma factor is associated with the core the holoenzyme is formed, which can initiate transcription.

It is found in the plastid. The protein resides in the chloroplast. The enzyme catalyses RNA(n) + a ribonucleoside 5'-triphosphate = RNA(n+1) + diphosphate. Its function is as follows. DNA-dependent RNA polymerase catalyzes the transcription of DNA into RNA using the four ribonucleoside triphosphates as substrates. The protein is DNA-directed RNA polymerase subunit beta of Aethionema grandiflorum (Persian stone-cress).